The following is a 209-amino-acid chain: Ribosomal RNA large subunit methyltransferase E (209 aa).

Positions 63, 65, 83, 99, and 124 each coordinate S-adenosyl-L-methionine. K164 (proton acceptor) is an active-site residue.

The protein belongs to the class I-like SAM-binding methyltransferase superfamily. RNA methyltransferase RlmE family.

The protein localises to the cytoplasm. The enzyme catalyses uridine(2552) in 23S rRNA + S-adenosyl-L-methionine = 2'-O-methyluridine(2552) in 23S rRNA + S-adenosyl-L-homocysteine + H(+). Its function is as follows. Specifically methylates the uridine in position 2552 of 23S rRNA at the 2'-O position of the ribose in the fully assembled 50S ribosomal subunit. In Escherichia coli O81 (strain ED1a), this protein is Ribosomal RNA large subunit methyltransferase E.